A 67-amino-acid chain; its full sequence is uncharacterized protein (67 aa).

Helical transmembrane passes span 8-28 (MWFALGSMGLMFLAVASIYLS) and 41-61 (ISSFAYMCMLISGIIVFVVVF).

Its subcellular location is the cell membrane. This is an uncharacterized protein from Bacillus subtilis (strain 168).